We begin with the raw amino-acid sequence, 223 residues long: MDGVDELLLRKFNLTLPPGLLRTAFVHKSFSFENGACQNNERLEFLGDAVLGLVVSHYLFETCPEYTEGQLSAARSYIVSGTSIAQIAKELNLGQFMLLGKGEKLAGGMDKTSLLADLLESLIGAVMVDQGFESARDFVLALVGEKLRQVGEFSVDDPKTKLQKLTRTQLVYEVVTEGPPHSRTFKASVIVNEKRFFGQGSSKKQAQVAAAMSALASLENKSS.

In terms of domain architecture, RNase III spans methionine 1–glycine 131. Residue glutamate 44 coordinates Mg(2+). Aspartate 48 is a catalytic residue. Residues aspartate 117 and glutamate 120 each coordinate Mg(2+). Glutamate 120 is an active-site residue. One can recognise a DRBM domain in the interval aspartate 157–asparagine 220.

The protein belongs to the ribonuclease III family. In terms of assembly, homodimer. It depends on Mg(2+) as a cofactor.

The protein localises to the cytoplasm. The catalysed reaction is Endonucleolytic cleavage to 5'-phosphomonoester.. In terms of biological role, digests double-stranded RNA. Involved in the processing of primary rRNA transcript to yield the immediate precursors to the large and small rRNAs (23S and 16S). Processes some mRNAs, and tRNAs when they are encoded in the rRNA operon. Processes pre-crRNA and tracrRNA of type II CRISPR loci if present in the organism. This Tropheryma whipplei (strain Twist) (Whipple's bacillus) protein is Ribonuclease 3.